The sequence spans 226 residues: MENTASGFLGPLLVLQAGFFLLTRILTIPQSLDSWWTSLNFLGGAPTCPGQNSQSPTSNHSPTSCPPICPGYRWMCLRRFIIFLFILLLCLIFLLVLLDYHGMLPVCPLLPGTSTTSTGPCKTCTIPAQGTSMFPSCCCTKPSDGNCTCIPIPSSWAFARFLWEWASVRFSWLSLLVPFVQWFVGLSPTVWLSVIWMMWYWGPSLYNILSPFLPLLPIFFCLWVYI.

Over 1-7 (MENTASG) the chain is Virion surface. A helical membrane pass occupies residues 8–28 (FLGPLLVLQAGFFLLTRILTI). Over 29–79 (PQSLDSWWTSLNFLGGAPTCPGQNSQSPTSNHSPTSCPPICPGYRWMCLRR) the chain is Intravirion. Residues 80–100 (FIIFLFILLLCLIFLLVLLDY) form a helical membrane-spanning segment. Topologically, residues 101 to 174 (HGMLPVCPLL…WASVRFSWLS (74 aa)) are virion surface. N-linked (GlcNAc...) asparagine; by host glycosylation is present at asparagine 146. A helical transmembrane segment spans residues 175-195 (LLVPFVQWFVGLSPTVWLSVI). The Intravirion portion of the chain corresponds to 196–201 (WMMWYW). A helical membrane pass occupies residues 202–224 (GPSLYNILSPFLPLLPIFFCLWV). The Virion surface segment spans residues 225–226 (YI).

This sequence belongs to the orthohepadnavirus major surface antigen family.

The protein resides in the virion membrane. Its function is as follows. The large envelope protein exists in two topological conformations, one which is termed 'external' or Le-HBsAg and the other 'internal' or Li-HBsAg. In its external conformation the protein attaches the virus to cell receptors and thereby initiating infection. This interaction determines the species specificity and liver tropism. This attachment induces virion internalization predominantly through caveolin-mediated endocytosis. The large envelope protein also assumes fusion between virion membrane and endosomal membrane. In its internal conformation the protein plays a role in virion morphogenesis and mediates the contact with the nucleocapsid like a matrix protein. In terms of biological role, the middle envelope protein plays an important role in the budding of the virion. It is involved in the induction of budding in a nucleocapsid independent way. In this process the majority of envelope proteins bud to form subviral lipoprotein particles of 22 nm of diameter that do not contain a nucleocapsid. This chain is Small envelope protein (S), found in Hepatitis B virus genotype C subtype adr (isolate China/NC-1/1988) (HBV-C).